The primary structure comprises 596 residues: M-phase inducer phosphatase (596 aa).

Phosphoserine occurs at positions 99 and 178. The tract at residues L174–A221 is disordered. A Rhodanese domain is found at I429–D533. C480 (phosphocysteine intermediate) is an active-site residue.

This sequence belongs to the MPI phosphatase family. As to quaternary structure, interacts with rad24 during G2 in a srk1-dependent manner; the interaction is increased during osmostress. Phosphorylated by srk1 in the N-terminus; phosphorylation promotes nuclear exclusion.

The protein resides in the cytoplasm. It localises to the nucleus. The catalysed reaction is O-phospho-L-tyrosyl-[protein] + H2O = L-tyrosyl-[protein] + phosphate. Tyrosine protein phosphatase which functions as a dosage-dependent inducer of mitotic and meiotic progression. Directly dephosphorylates cdc2 and stimulates its kinase activity. Required for the G2/M transition of the cell cycle. Required for induction of meiosis II. The sequence is that of M-phase inducer phosphatase from Schizosaccharomyces pombe (strain 972 / ATCC 24843) (Fission yeast).